Consider the following 292-residue polypeptide: uncharacterized protein (292 aa).

Residues 66 to 86 form a helical membrane-spanning segment; that stretch reads LFFYLLFWWTYLTIVVLLTVP.

The protein resides in the host membrane. This is an uncharacterized protein from Alcelaphine herpesvirus 1 (strain C500) (AlHV-1).